We begin with the raw amino-acid sequence, 177 residues long: Large ribosomal subunit protein uL5 (177 aa).

It belongs to the universal ribosomal protein uL5 family. Part of the 50S ribosomal subunit; part of the 5S rRNA/L5/L18/L25 subcomplex. Contacts the 5S rRNA and the P site tRNA. Forms a bridge to the 30S subunit in the 70S ribosome.

This is one of the proteins that bind and probably mediate the attachment of the 5S RNA into the large ribosomal subunit, where it forms part of the central protuberance. In the 70S ribosome it contacts protein S13 of the 30S subunit (bridge B1b), connecting the 2 subunits; this bridge is implicated in subunit movement. Contacts the P site tRNA; the 5S rRNA and some of its associated proteins might help stabilize positioning of ribosome-bound tRNAs. The sequence is that of Large ribosomal subunit protein uL5 from Neorickettsia sennetsu (strain ATCC VR-367 / Miyayama) (Ehrlichia sennetsu).